A 1587-amino-acid chain; its full sequence is Pentafunctional AROM polypeptide (1587 aa).

The segment at 1–384 is 3-dehydroquinate synthase; sequence MIEPTKISIL…YEPRASVVAN (384 aa). NAD(+)-binding positions include 44 to 46, 81 to 84, 114 to 116, and Asp119; these read DTN, EVSK, and GGV. Position 130 (Arg130) interacts with 7-phospho-2-dehydro-3-deoxy-D-arabino-heptonate. 139–140 is an NAD(+) binding site; sequence TT. The 7-phospho-2-dehydro-3-deoxy-D-arabino-heptonate site is built by Asp146 and Lys152. Lys161 contributes to the NAD(+) binding site. Asn162 serves as a coordination point for 7-phospho-2-dehydro-3-deoxy-D-arabino-heptonate. NAD(+) contacts are provided by residues 179–182 and Asn190; that span reads FLET. Glu194 contributes to the Zn(2+) binding site. 7-phospho-2-dehydro-3-deoxy-D-arabino-heptonate is bound by residues 194–197 and Lys250; that span reads EVIK. Glu260 functions as the Proton acceptor; for 3-dehydroquinate synthase activity in the catalytic mechanism. 7-phospho-2-dehydro-3-deoxy-D-arabino-heptonate-binding positions include 264 to 268 and His271; that span reads RNLLN. Residue His271 participates in Zn(2+) binding. His275 (proton acceptor; for 3-dehydroquinate synthase activity) is an active-site residue. Residues His287 and Lys356 each coordinate 7-phospho-2-dehydro-3-deoxy-D-arabino-heptonate. Residue His287 participates in Zn(2+) binding. The tract at residues 397–842 is EPSP synthase; that stretch reads VFPGVSPKST…WDTLRLKFAV (446 aa). The active-site For EPSP synthase activity is the Cys824. The tract at residues 864–1055 is shikimate kinase; it reads SASVFIIGMR…KKKQHSFFVS (192 aa). 871-878 provides a ligand contact to ATP; that stretch reads GMRGAGKT. Residues 1056–1276 form a 3-dehydroquinase region; the sequence is LTLPDLRPAG…AAPGQLSATE (221 aa). His1179 functions as the Proton acceptor; for 3-dehydroquinate dehydratase activity in the catalytic mechanism. Residue Lys1207 is the Schiff-base intermediate with substrate; for 3-dehydroquinate dehydratase activity of the active site. A shikimate dehydrogenase region spans residues 1289-1587; it reads KKRFALFGTP…RDAVLGTKAD (299 aa).

This sequence in the N-terminal section; belongs to the sugar phosphate cyclases superfamily. Dehydroquinate synthase family. In the 2nd section; belongs to the EPSP synthase family. The protein in the 3rd section; belongs to the shikimate kinase family. It in the 4th section; belongs to the type-I 3-dehydroquinase family. This sequence in the C-terminal section; belongs to the shikimate dehydrogenase family. Homodimer. Zn(2+) serves as cofactor.

The protein resides in the cytoplasm. The enzyme catalyses 7-phospho-2-dehydro-3-deoxy-D-arabino-heptonate = 3-dehydroquinate + phosphate. It catalyses the reaction 3-dehydroquinate = 3-dehydroshikimate + H2O. The catalysed reaction is shikimate + NADP(+) = 3-dehydroshikimate + NADPH + H(+). It carries out the reaction shikimate + ATP = 3-phosphoshikimate + ADP + H(+). The enzyme catalyses 3-phosphoshikimate + phosphoenolpyruvate = 5-O-(1-carboxyvinyl)-3-phosphoshikimate + phosphate. The protein operates within metabolic intermediate biosynthesis; chorismate biosynthesis; chorismate from D-erythrose 4-phosphate and phosphoenolpyruvate: step 2/7. It participates in metabolic intermediate biosynthesis; chorismate biosynthesis; chorismate from D-erythrose 4-phosphate and phosphoenolpyruvate: step 3/7. It functions in the pathway metabolic intermediate biosynthesis; chorismate biosynthesis; chorismate from D-erythrose 4-phosphate and phosphoenolpyruvate: step 4/7. Its pathway is metabolic intermediate biosynthesis; chorismate biosynthesis; chorismate from D-erythrose 4-phosphate and phosphoenolpyruvate: step 5/7. The protein operates within metabolic intermediate biosynthesis; chorismate biosynthesis; chorismate from D-erythrose 4-phosphate and phosphoenolpyruvate: step 6/7. In terms of biological role, the AROM polypeptide catalyzes 5 consecutive enzymatic reactions in prechorismate polyaromatic amino acid biosynthesis. In Aspergillus clavatus (strain ATCC 1007 / CBS 513.65 / DSM 816 / NCTC 3887 / NRRL 1 / QM 1276 / 107), this protein is Pentafunctional AROM polypeptide.